The sequence spans 83 residues: Protein YqgD (83 aa).

It belongs to the YqgD family.

The sequence is that of Protein YqgD (yqgD) from Escherichia coli (strain K12).